Consider the following 470-residue polypeptide: Maturase K (470 aa).

This sequence belongs to the intron maturase 2 family. MatK subfamily.

It localises to the plastid. Its subcellular location is the chloroplast. Its function is as follows. Usually encoded in the trnK tRNA gene intron. Probably assists in splicing its own and other chloroplast group II introns. The sequence is that of Maturase K from Nypa fruticans (Nypa palm).